We begin with the raw amino-acid sequence, 215 residues long: Nascent polypeptide-associated complex subunit alpha (215 aa).

The interval 1–81 (MPGEATDTVP…SEKKARKAMS (81 aa)) is disordered. Over residues 9–28 (VPATEQELPQPQAETGSGTE) the composition is skewed to polar residues. The span at 29-42 (SDSDESVPELEEQD) shows a compositional bias: acidic residues. Phosphoserine; by ILK1 is present on Ser43. Residues 44-57 (TQATTQQAQLAAAA) are compositionally biased toward low complexity. Residues 69–80 (QSRSEKKARKAM) form a required for DNA-binding region. Residues 70–135 (SRSEKKARKA…AKIEDLSQQA (66 aa)) form the NAC-A/B domain. The interval 93–108 (RVTIRKSKNILFVITK) is RNA/DNA-binding. Ser132 carries the post-translational modification Phosphoserine. Lys142 bears the N6-acetyllysine; alternate mark. Residue Lys142 forms a Glycyl lysine isopeptide (Lys-Gly) (interchain with G-Cter in SUMO2); alternate linkage. Thr159 is subject to Phosphothreonine; by GSK3-beta. Thr161 is subject to Phosphothreonine. Ser166, Ser186, Ser191, and Ser203 each carry phosphoserine. Residues 176 to 213 (VEVKDIELVMSQANVSRAKAVRALKNNSNDIVNAIMEL) form the UBA domain.

This sequence belongs to the NAC-alpha family. As to quaternary structure, part of the nascent polypeptide-associated complex (NAC), which is a heterodimer of NACA and BTF3 (via NAC-A/B domains). NAC associates with ribosomes through the BTF3/NACB subunit and contacts the ribosomal protein L23, which is positioned near the exiting site. Both subunits can contact nascent polypeptide chains. NACA may also form homodimers, and only this form binds DNA. Interacts with TBP and JUN. Post-translationally, phosphorylation of Ser-43 by ILK during cell adhesion may promote nuclear localization. Phosphorylation of Thr-159 by GSK3B may promote proteasome mediated degradation.

The protein localises to the cytoplasm. Its subcellular location is the nucleus. Prevents inappropriate targeting of non-secretory polypeptides to the endoplasmic reticulum (ER). Binds to nascent polypeptide chains as they emerge from the ribosome and blocks their interaction with the signal recognition particle (SRP), which normally targets nascent secretory peptides to the ER. Also reduces the inherent affinity of ribosomes for protein translocation sites in the ER membrane (M sites). May act as a specific coactivator for JUN, binding to DNA and stabilizing the interaction of JUN homodimers with target gene promoters. This Bos taurus (Bovine) protein is Nascent polypeptide-associated complex subunit alpha (NACA).